Consider the following 972-residue polypeptide: DNA cross-link repair 1A protein (972 aa).

Positions 14 to 80 (YKSIRKRKPQ…SEDLDPCKDD (67 aa)) are disordered. Residues 23 to 37 (QSNPDSTSVSMQTVT) show a composition bias toward polar residues. Residues 39-54 (GKCRPKRKGSGNRKKS) show a composition bias toward basic residues. Over residues 64 to 80 (SEQRLRPSEDLDPCKDD) the composition is skewed to basic and acidic residues. The UBZ4-type zinc-finger motif lies at 105–135 (DGYCPSCQMPFSLLVVQTPRWHVAECLDTPG). Zn(2+) is bound by residues Cys108, Cys111, His126, and Cys130. Disordered regions lie at residues 191–219 (KSSCFPSPVEDSQAEKPSKNLKNVPNNEC) and 552–623 (GEAC…TTDE). Positions 210 to 219 (NLKNVPNNEC) are enriched in polar residues.

The protein belongs to the DNA repair metallo-beta-lactamase (DRMBL) family. Binds PIAS1.

It localises to the nucleus. It carries out the reaction a beta-lactam + H2O = a substituted beta-amino acid. May be required for DNA interstrand cross-link repair. This Gallus gallus (Chicken) protein is DNA cross-link repair 1A protein (DCLRE1A).